Here is a 235-residue protein sequence, read N- to C-terminus: Large ribosomal subunit protein uL1 (235 aa).

It belongs to the universal ribosomal protein uL1 family. Part of the 50S ribosomal subunit.

Functionally, binds directly to 23S rRNA. The L1 stalk is quite mobile in the ribosome, and is involved in E site tRNA release. Protein L1 is also a translational repressor protein, it controls the translation of the L11 operon by binding to its mRNA. The sequence is that of Large ribosomal subunit protein uL1 from Prochlorococcus marinus (strain MIT 9515).